The sequence spans 275 residues: MHLWFTEKQNDNFAISYRVNETLHTETTPFQHLAVLDTVPFGRTLVLDGIVQTSVVDEYVYHEMITHVPLNTHPDPRRVLIVGGGDGGTLREVTKHPSVEKATLVEIDERVIAASKKYLPELACGFDSPKAEVVIGDGIKYVAEHKKTFDLVIVDSTDPIGPAVGLFSLEFYRSIYEALKDEGLFVAQTESPYFNTDLILRIYRDIAGIFPLARTYWACIPTYPGAMWSFTIGSKKHDPAQVAPEKIREHATRYYTPEIHRASFAMPRFLADRFR.

Residues 2 to 235 (HLWFTEKQND…AMWSFTIGSK (234 aa)) enclose the PABS domain. Gln-31 lines the S-methyl-5'-thioadenosine pocket. Spermidine is bound by residues His-62 and Asp-86. S-methyl-5'-thioadenosine contacts are provided by residues Glu-106 and 137 to 138 (DG). Catalysis depends on Asp-155, which acts as the Proton acceptor. Spermidine is bound at residue 155–158 (DSTD). S-methyl-5'-thioadenosine is bound at residue Pro-162.

This sequence belongs to the spermidine/spermine synthase family. Homodimer or homotetramer.

It localises to the cytoplasm. The catalysed reaction is S-adenosyl 3-(methylsulfanyl)propylamine + putrescine = S-methyl-5'-thioadenosine + spermidine + H(+). It participates in amine and polyamine biosynthesis; spermidine biosynthesis; spermidine from putrescine: step 1/1. Catalyzes the irreversible transfer of a propylamine group from the amino donor S-adenosylmethioninamine (decarboxy-AdoMet) to putrescine (1,4-diaminobutane) to yield spermidine. This is Polyamine aminopropyltransferase from Desulforudis audaxviator (strain MP104C).